Here is a 189-residue protein sequence, read N- to C-terminus: HTH-type transcriptional regulator Hpr (189 aa).

Positions 12-156 (ALLYSHKIVQ…ISAIVRRLYG (145 aa)) constitute an HTH marR-type domain. A DNA-binding region (H-T-H motif) is located at residues 62 to 85 (ISEIAKYGVMHVSTAFNFSKKLED).

In terms of assembly, homodimer.

Its function is as follows. Negative regulator of protease production and sporulation. The polypeptide is HTH-type transcriptional regulator Hpr (Exiguobacterium sibiricum (strain DSM 17290 / CCUG 55495 / CIP 109462 / JCM 13490 / 255-15)).